We begin with the raw amino-acid sequence, 396 residues long: Elongation factor Tu (396 aa).

A tr-type G domain is found at 10–205 (KTHANIGTIG…AVDEYIPTPE (196 aa)). Residues 19–26 (GHVDHGKT) form a G1 region. 19–26 (GHVDHGKT) serves as a coordination point for GTP. Threonine 26 lines the Mg(2+) pocket. Residues 61–65 (GITIS) form a G2 region. The interval 82-85 (DCPG) is G3. Residues 82-86 (DCPGH) and 137-140 (NKCD) contribute to the GTP site. The interval 137-140 (NKCD) is G4. Residues 175–177 (SAL) are G5.

This sequence belongs to the TRAFAC class translation factor GTPase superfamily. Classic translation factor GTPase family. EF-Tu/EF-1A subfamily. In terms of assembly, monomer.

Its subcellular location is the cytoplasm. The catalysed reaction is GTP + H2O = GDP + phosphate + H(+). Its function is as follows. GTP hydrolase that promotes the GTP-dependent binding of aminoacyl-tRNA to the A-site of ribosomes during protein biosynthesis. The polypeptide is Elongation factor Tu (Shouchella clausii (strain KSM-K16) (Alkalihalobacillus clausii)).